The chain runs to 172 residues: Peptide methionine sulfoxide reductase MsrA 2 (172 aa).

Residue cysteine 12 is part of the active site.

This sequence belongs to the MsrA Met sulfoxide reductase family.

It catalyses the reaction L-methionyl-[protein] + [thioredoxin]-disulfide + H2O = L-methionyl-(S)-S-oxide-[protein] + [thioredoxin]-dithiol. The enzyme catalyses [thioredoxin]-disulfide + L-methionine + H2O = L-methionine (S)-S-oxide + [thioredoxin]-dithiol. Functionally, has an important function as a repair enzyme for proteins that have been inactivated by oxidation. Catalyzes the reversible oxidation-reduction of methionine sulfoxide in proteins to methionine. The polypeptide is Peptide methionine sulfoxide reductase MsrA 2 (msrA2) (Lactococcus lactis subsp. lactis (strain IL1403) (Streptococcus lactis)).